The primary structure comprises 189 residues: Ribosome maturation factor RimP (189 aa).

The protein belongs to the RimP family.

It is found in the cytoplasm. Its function is as follows. Required for maturation of 30S ribosomal subunits. This Mycobacteroides abscessus (strain ATCC 19977 / DSM 44196 / CCUG 20993 / CIP 104536 / JCM 13569 / NCTC 13031 / TMC 1543 / L948) (Mycobacterium abscessus) protein is Ribosome maturation factor RimP.